The primary structure comprises 591 residues: Phosphoglucan phosphatase LSF1, chloroplastic (591 aa).

The N-terminal 61 residues, 1–61 (MAFLQQISGL…RRRRVVLRVV (61 aa)), are a transit peptide targeting the chloroplast. In terms of domain architecture, Tyrosine-protein phosphatase spans 291–453 (RYSKITEQIY…VDDGKHDGTP (163 aa)). Cysteine 390 (phosphocysteine intermediate) is an active-site residue. 390 to 396 (CTTGFDR) is a binding site for substrate.

It is found in the plastid. The protein resides in the chloroplast. Starch granule-associated phosphoglucan phosphatase involved in the control of starch accumulation. Participates in the regulation of the initial steps of starch degradation at the granule surface. May release a different set of phosphate groups from those removed by DSP4. This is Phosphoglucan phosphatase LSF1, chloroplastic (LSF1) from Arabidopsis thaliana (Mouse-ear cress).